The primary structure comprises 91 residues: Conotoxin Im9.1 (91 aa).

Positions Met-1–Gly-23 are cleaved as a signal peptide. Positions Asp-24–Arg-55 are excised as a propeptide. 3 disulfide bridges follow: Cys-56/Cys-72, Cys-63/Cys-83, and Cys-66/Cys-86.

This sequence belongs to the conotoxin M superfamily. Expressed by the venom duct.

The protein resides in the secreted. Its function is as follows. Probable neurotoxin. The polypeptide is Conotoxin Im9.1 (Conus imperialis (Imperial cone)).